We begin with the raw amino-acid sequence, 444 residues long: CCA-adding enzyme (444 aa).

ATP-binding residues include Ser-57 and Arg-60. CTP is bound by residues Ser-57 and Arg-60. Residues Asp-69, Asp-71, and Asp-124 each coordinate Mg(2+). ATP-binding residues include His-147, Lys-168, and Tyr-177. Positions 147, 168, and 177 each coordinate CTP.

Belongs to the tRNA nucleotidyltransferase/poly(A) polymerase family. Archaeal CCA-adding enzyme subfamily. In terms of assembly, homodimer. Requires Mg(2+) as cofactor.

It catalyses the reaction a tRNA precursor + 2 CTP + ATP = a tRNA with a 3' CCA end + 3 diphosphate. The catalysed reaction is a tRNA with a 3' CCA end + 2 CTP + ATP = a tRNA with a 3' CCACCA end + 3 diphosphate. In terms of biological role, catalyzes the addition and repair of the essential 3'-terminal CCA sequence in tRNAs without using a nucleic acid template. Adds these three nucleotides in the order of C, C, and A to the tRNA nucleotide-73, using CTP and ATP as substrates and producing inorganic pyrophosphate. tRNA 3'-terminal CCA addition is required both for tRNA processing and repair. Also involved in tRNA surveillance by mediating tandem CCA addition to generate a CCACCA at the 3' terminus of unstable tRNAs. While stable tRNAs receive only 3'-terminal CCA, unstable tRNAs are marked with CCACCA and rapidly degraded. This Methanococcus maripaludis (strain DSM 14266 / JCM 13030 / NBRC 101832 / S2 / LL) protein is CCA-adding enzyme.